The chain runs to 396 residues: Elongation factor Tu (396 aa).

The tr-type G domain maps to 10 to 206; that stretch reads KPHVNVGTIG…TMDSYIPEPV (197 aa). A G1 region spans residues 19 to 26; it reads GHVDHGKT. GTP is bound at residue 19–26; the sequence is GHVDHGKT. Threonine 26 lines the Mg(2+) pocket. A G2 region spans residues 60-64; it reads GITIS. The G3 stretch occupies residues 81 to 84; the sequence is DCPG. Residues 81 to 85 and 136 to 139 contribute to the GTP site; these read DCPGH and NKAD. Residues 136 to 139 are G4; it reads NKAD. The tract at residues 174–176 is G5; the sequence is SAL.

Belongs to the TRAFAC class translation factor GTPase superfamily. Classic translation factor GTPase family. EF-Tu/EF-1A subfamily. As to quaternary structure, monomer.

It is found in the cytoplasm. It carries out the reaction GTP + H2O = GDP + phosphate + H(+). GTP hydrolase that promotes the GTP-dependent binding of aminoacyl-tRNA to the A-site of ribosomes during protein biosynthesis. This Legionella pneumophila (strain Lens) protein is Elongation factor Tu.